A 196-amino-acid chain; its full sequence is Dual-action ribosomal maturation protein DarP (196 aa).

This sequence belongs to the DarP family.

Its subcellular location is the cytoplasm. Member of a network of 50S ribosomal subunit biogenesis factors which assembles along the 30S-50S interface, preventing incorrect 23S rRNA structures from forming. Promotes peptidyl transferase center (PTC) maturation. The sequence is that of Dual-action ribosomal maturation protein DarP from Stenotrophomonas maltophilia (strain R551-3).